The primary structure comprises 94 residues: Defensin alpha 5 (94 aa).

A signal peptide spans Met-1–Ala-19. 3 cysteine pairs are disulfide-bonded: Cys-65-Cys-93, Cys-67-Cys-82, and Cys-72-Cys-92.

The protein belongs to the alpha-defensin family. As to quaternary structure, homodimer. Homotetramer. Interacts with B.antracis lef/lethal factor. Glycosylated. In terms of processing, proteolytically cleaved at Arg-62 by trypsin. Both the propeptide form proHD5/HD5(20-94) and HD5(56-94) are cleaved into the lumenal peptide form HD5(63-94) by trypsin. Unprocessed proHD5 exerts antimicrobial activities, but peptide potency is enhanced by peptide processing. Proteolytically cleaved in duodenal fluid; derived fragments are antimicrobially active against commensal bacteria (in vitro).

It is found in the secreted. It localises to the cytoplasmic vesicle. Its subcellular location is the secretory vesicle. Functionally, host-defense peptide that maintains sterility in the urogenital system. Has antimicrobial activity against a wide range of bacteria, including Gram-negative E.coli, P.aeruginosa and S.typhimurium, and Gram-positive E.aerogenes, S.aureus, B.cereus, E.faecium and L.monocytogenes. Confers resistance to intestinal infection by S.typhimurium. Exhibits antimicrobial activity against enteric commensal bacteria such as B.adolescentis, L.acidophilus, B.breve, L.fermentum, B.longum and S.thermophilus. Binds to bacterial membranes and causes membrane disintegration. Induces the secretion of the chemokine IL-8 by intestinal epithelial cells. Binds to B.antracis lef/lethal factor, a major virulence factor from B.anthracis, and neutralizes its enzymatic activity. The chain is Defensin alpha 5 (DEFA5) from Pan troglodytes (Chimpanzee).